The sequence spans 401 residues: Voltage-gated potassium channel subunit beta-1 (401 aa).

Positions 90, 91, 97, and 119 each coordinate NADP(+). Catalysis depends on Tyr-124, which acts as the Proton donor/acceptor. NADP(+)-binding residues include Asn-192, Ser-222, Arg-223, Gln-248, Trp-277, Ser-278, Pro-279, Leu-280, Ala-281, Cys-282, Lys-288, Arg-298, Gly-357, Ser-359, Gln-363, Glu-366, and Asn-367.

This sequence belongs to the shaker potassium channel beta subunit family. As to quaternary structure, homotetramer. Interaction with tetrameric potassium channel alpha subunits gives rise to a heterooctamer. Identified in potassium channel complexes containing KCNA1, KCNA2, KCNA4, KCNA5, KCNA6, KCNAB1 and KCNAB2. Part of a complex containing KCNA1, KCNA4 and LGI1; interaction with LGI1 inhibits down-regulation of KCNA1 channel activity. Interacts with the dimer formed by GNB1 and GNG2; this enhances KCNA1 binding. Interacts with SQSTM. In terms of tissue distribution, detected in brain, in hippocampus and striatum (at protein level). Predominantly expressed in brain. No expression found in heart, skeletal muscle or kidney. In the late embryonic and early neonatal brain, highly expressed in hippocampus, cerebral cortex, caudate putamen, colliculus and cerebellum.

Its subcellular location is the cytoplasm. It localises to the membrane. The protein resides in the cell membrane. The catalysed reaction is a primary alcohol + NADP(+) = an aldehyde + NADPH + H(+). The enzyme catalyses a secondary alcohol + NADP(+) = a ketone + NADPH + H(+). Its function is as follows. Regulatory subunit of the voltage-gated potassium (Kv) Shaker channels composed of pore-forming and potassium-conducting alpha subunits and of regulatory beta subunits. The beta-1/KCNAB1 cytoplasmic subunit mediates closure of delayed rectifier potassium channels by physically obstructing the pore via its N-terminal domain and increases the speed of channel closure for other family members. Promotes the inactivation of KCNA1, KCNA2, KCNA4, KCNA5 and KCNA6 alpha subunit-containing channels. Displays nicotinamide adenine dinucleotide phosphate (NADPH)-dependent aldoketoreductase activity by catalyzing the NADPH-dependent reduction of a variety of endogenous aldehydes and ketones. The binding of NADPH is required for efficient down-regulation of potassium channel activity. Oxidation of the bound NADPH restrains N-terminal domain from blocking the channel, thereby decreasing N-type inactivation of potassium channel activity. The sequence is that of Voltage-gated potassium channel subunit beta-1 from Mus musculus (Mouse).